A 380-amino-acid polypeptide reads, in one-letter code: Cytochrome b (380 aa).

A run of 4 helical transmembrane segments spans residues 33–53, 77–98, 113–133, and 178–198; these read FGSLLGLCLATQILTGLFLAM, WLIRNMHANGASFFFICIYLHI, WNVGVALFLLTMMTAFVGYVL, and FFAFHFLFPFVIAALTAIHLL. Residues His83 and His97 each contribute to the heme b site. Residues His182 and His196 each coordinate heme b. An a ubiquinone-binding site is contributed by His201. 4 helical membrane passes run 226–246, 288–308, 320–340, and 347–367; these read YKDLLGFATLMVTLTSLALFS, LGGVLALLSSILILTAVPALH, ITQLLFWTLVAAVLVLTWIGG, and FIIIGQIASLLYFMLFLTLIP.

The protein belongs to the cytochrome b family. As to quaternary structure, the cytochrome bc1 complex contains 3 respiratory subunits (MT-CYB, CYC1 and UQCRFS1), 2 core proteins (UQCRC1 and UQCRC2) and probably 6 low-molecular weight proteins. Heme b serves as cofactor.

The protein localises to the mitochondrion inner membrane. In terms of biological role, component of the ubiquinol-cytochrome c reductase complex (complex III or cytochrome b-c1 complex) that is part of the mitochondrial respiratory chain. The b-c1 complex mediates electron transfer from ubiquinol to cytochrome c. Contributes to the generation of a proton gradient across the mitochondrial membrane that is then used for ATP synthesis. In Percopsis transmontana (Sand roller), this protein is Cytochrome b (mt-cyb).